Reading from the N-terminus, the 882-residue chain is MPEIAQAHTPMMRQYLETKARYPDAILFFRLGDFYEMFFEDALTASEALQITLTARSKGDDKVPMCGVPYHAARGYVARLLEKGFKVAICDQVEEPGKSQLVKREVTRVVTPGMVLDDQVLDPREASWLGAVALDDGRAGLALLDASTGQLQCGEVDGDERLVDELRRAGVRELVFSSAADGARAEAIARAVGAPAARRDAAEFERAEDRLRKHLGVPSLDGFGVSGLPLGLAAAAAALAYLADTQRAAPRHVDRISRLSTDDVLLLDEATRTNLELERTLSGGRKKGTLLALLDRTVTAPGGRRLAEWLRYPLTDLARIGARLDAVEELTGAAVAREELALALRPVADLERLLSRLVLGQGNARDLRALAGALLALPALAAVLEARGAARLREAGARLRGLEALAAHLDAAVAEEPPATLREGGIIRRGHSAELDEIVAIAEDGKGWIAALEAKERERTGIGSLKVRFNKVFGYYLEVTRPNLHLVPKDWERRQTTVGGERFVTPELKTLEEKVLTAEERRAALEERLFEALRQAVAAEAPRVRTAADAVATADALLSLSRVAAERGYVRPEVDASEALEIVDGRHPVVEAVLPDGPAAYVPNDVLVASRDAPECAEHGALLVITGPNMAGKSTVMREAALVVLLAQMGAFVPARRARIGLVDRIFTRVGASDDLARGRSTFMVEMTETAAILHNATRRSLVVLDEIGRGTSTFDGVSIAWAVAEHLHDVTGCRTLFATHYHELQDLARERPAVRNLTVAVREVGDRVVFLRKLVQGGASRSYGIEVAKLAGLPAEVLARAREILKNLEAMEVDEGGHPALARGRRRRAGPSAAQLGLFGGGAAADPAAEEVAKAIRAIDLDALRPLDALNLLAGWKKSLE.

ATP is bound at residue 627–634; sequence GPNMAGKS.

Belongs to the DNA mismatch repair MutS family.

Its function is as follows. This protein is involved in the repair of mismatches in DNA. It is possible that it carries out the mismatch recognition step. This protein has a weak ATPase activity. The polypeptide is DNA mismatch repair protein MutS (Anaeromyxobacter sp. (strain K)).